The chain runs to 213 residues: Phosphatidylserine decarboxylase proenzyme (213 aa).

Ser182 (schiff-base intermediate with substrate; via pyruvic acid) is an active-site residue. At Ser182 the chain carries Pyruvic acid (Ser); by autocatalysis.

Belongs to the phosphatidylserine decarboxylase family. PSD-A subfamily. As to quaternary structure, heterodimer of a large membrane-associated beta subunit and a small pyruvoyl-containing alpha subunit. Pyruvate serves as cofactor. Post-translationally, is synthesized initially as an inactive proenzyme. Formation of the active enzyme involves a self-maturation process in which the active site pyruvoyl group is generated from an internal serine residue via an autocatalytic post-translational modification. Two non-identical subunits are generated from the proenzyme in this reaction, and the pyruvate is formed at the N-terminus of the alpha chain, which is derived from the carboxyl end of the proenzyme. The post-translation cleavage follows an unusual pathway, termed non-hydrolytic serinolysis, in which the side chain hydroxyl group of the serine supplies its oxygen atom to form the C-terminus of the beta chain, while the remainder of the serine residue undergoes an oxidative deamination to produce ammonia and the pyruvoyl prosthetic group on the alpha chain.

It is found in the cell membrane. The enzyme catalyses a 1,2-diacyl-sn-glycero-3-phospho-L-serine + H(+) = a 1,2-diacyl-sn-glycero-3-phosphoethanolamine + CO2. It participates in phospholipid metabolism; phosphatidylethanolamine biosynthesis; phosphatidylethanolamine from CDP-diacylglycerol: step 2/2. In terms of biological role, catalyzes the formation of phosphatidylethanolamine (PtdEtn) from phosphatidylserine (PtdSer). This is Phosphatidylserine decarboxylase proenzyme from Chlorobium phaeobacteroides (strain BS1).